A 332-amino-acid chain; its full sequence is Ketol-acid reductoisomerase (NADP(+)) (332 aa).

Positions 1 to 182 constitute a KARI N-terminal Rossmann domain; sequence MAQTWKDTDI…GSARAGLIKT (182 aa). NADP(+) contacts are provided by residues 25 to 28, lysine 48, serine 53, and 83 to 86; these read YGIQ and DMIQ. Residue histidine 108 is part of the active site. Glycine 134 serves as a coordination point for NADP(+). The region spanning 183–329 is the KARI C-terminal knotted domain; it reads AFKEEVETDW…KEMRKMMWPD (147 aa). 4 residues coordinate Mg(2+): aspartate 191, glutamate 195, glutamate 227, and glutamate 231. Residue serine 252 participates in substrate binding.

The protein belongs to the ketol-acid reductoisomerase family. The cofactor is Mg(2+).

It catalyses the reaction (2R)-2,3-dihydroxy-3-methylbutanoate + NADP(+) = (2S)-2-acetolactate + NADPH + H(+). It carries out the reaction (2R,3R)-2,3-dihydroxy-3-methylpentanoate + NADP(+) = (S)-2-ethyl-2-hydroxy-3-oxobutanoate + NADPH + H(+). It functions in the pathway amino-acid biosynthesis; L-isoleucine biosynthesis; L-isoleucine from 2-oxobutanoate: step 2/4. It participates in amino-acid biosynthesis; L-valine biosynthesis; L-valine from pyruvate: step 2/4. Functionally, involved in the biosynthesis of branched-chain amino acids (BCAA). Catalyzes an alkyl-migration followed by a ketol-acid reduction of (S)-2-acetolactate (S2AL) to yield (R)-2,3-dihydroxy-isovalerate. In the isomerase reaction, S2AL is rearranged via a Mg-dependent methyl migration to produce 3-hydroxy-3-methyl-2-ketobutyrate (HMKB). In the reductase reaction, this 2-ketoacid undergoes a metal-dependent reduction by NADPH to yield (R)-2,3-dihydroxy-isovalerate. This is Ketol-acid reductoisomerase (NADP(+)) from Nitrosopumilus maritimus (strain SCM1).